The primary structure comprises 708 residues: Metal-pseudopaline receptor CntO (708 aa).

An N-terminal signal peptide occupies residues 1–21 (MRVSVSLVLGVGLGCSSPALW). Positions 63 to 169 (RIEDIPQAIS…PGGTVNLVTK (107 aa)) constitute a TBDR plug domain. Residues 174 to 708 (ERFARLHASA…NLTMSLTLNY (535 aa)) form the TBDR beta-barrel domain.

Belongs to the TonB-dependent receptor family.

The protein resides in the cell outer membrane. Transports the metallophore pseudopaline, which is involved in the acquisition of nickel and zinc, and thus enables bacterial growth inside the host, where metal access is limited. Is probably involved in the import of pseudopaline-metal complexes. The sequence is that of Metal-pseudopaline receptor CntO from Pseudomonas aeruginosa (strain UCBPP-PA14).